A 220-amino-acid chain; its full sequence is Membrane steroid-binding protein 1 (220 aa).

A helical transmembrane segment spans residues 22-42 (VVFFTALALAFAIYQVISGWF). The 98-residue stretch at 74–171 (EITEEELKQY…SKYAKVGTVK (98 aa)) folds into the Cytochrome b5 heme-binding domain. The tract at residues 74-171 (EITEEELKQY…SKYAKVGTVK (98 aa)) is steroid-binding. The segment at 174–220 (GSEPETASVSEPTENVEQDAHVTTTPGKTVVDKSDDAPAETVLKKEE) is disordered. Positions 178 to 200 (ETASVSEPTENVEQDAHVTTTPG) are enriched in polar residues. Residues 203–220 (VVDKSDDAPAETVLKKEE) show a composition bias toward basic and acidic residues.

This sequence belongs to the cytochrome b5 family. MAPR subfamily. As to quaternary structure, interacts with BAK1 (via extracellular region). As to expression, expressed in cotyledons, stems, roots, leaves, flower and silique stalks, pistils and stigmas, but not in anthers.

Its subcellular location is the cell membrane. The protein resides in the endosome membrane. Its function is as follows. MSBP1 can bind to multiple steroid compounds with different affinities. Negatively regulates cell elongation and brassinosteroid signaling. May act as a coreceptor with BAK1 and enhances its endocytosis. This Arabidopsis thaliana (Mouse-ear cress) protein is Membrane steroid-binding protein 1 (MSBP1).